Consider the following 319-residue polypeptide: MENLILEIISGKQVTKEEALKFFDFELEEIFFAATKIRRKYKGNKVKVCSIINAKSGQCSEDCRFCTQSTFNKTDVKVYSLTDTEKIKEFSTKALENVGCFGIVSSGNSLNDVEIEKLCEMFKNHKKVSHLGVSIGKISDETFLKLKEAGIKKMHHNLETSENFYPNICSTHNYQERVDTIKRAKKFGFEICSGGLFGMGESLKDRIDLAFTLKALDANSIPMNFLMHIKGTALEHLPALPPVEILKTIAVFRIILKTPDIMICGGREVNLRDLQSWIFQAGANGMMTGGYLTTIGRDITSDKQMIKDLGLEIEPNHTY.

One can recognise a Radical SAM core domain in the interval 41 to 267 (YKGNKVKVCS…TPDIMICGGR (227 aa)). [4Fe-4S] cluster contacts are provided by cysteine 59, cysteine 63, and cysteine 66. Cysteine 192 lines the [2Fe-2S] cluster pocket.

Belongs to the radical SAM superfamily. Biotin synthase family. As to quaternary structure, homodimer. It depends on [4Fe-4S] cluster as a cofactor. [2Fe-2S] cluster serves as cofactor.

It carries out the reaction (4R,5S)-dethiobiotin + (sulfur carrier)-SH + 2 reduced [2Fe-2S]-[ferredoxin] + 2 S-adenosyl-L-methionine = (sulfur carrier)-H + biotin + 2 5'-deoxyadenosine + 2 L-methionine + 2 oxidized [2Fe-2S]-[ferredoxin]. It participates in cofactor biosynthesis; biotin biosynthesis; biotin from 7,8-diaminononanoate: step 2/2. In terms of biological role, catalyzes the conversion of dethiobiotin (DTB) to biotin by the insertion of a sulfur atom into dethiobiotin via a radical-based mechanism. The chain is Biotin synthase from Endomicrobium trichonymphae.